The chain runs to 844 residues: 3',5'-cyclic-AMP phosphodiesterase 4A (844 aa).

A disordered region spans residues 1-124 (MEPPAAPSER…RSPLDSQASP (124 aa)). S13 carries the post-translational modification Phosphoserine. Residues 36 to 46 (QPRTPIRIQQR) show a composition bias toward low complexity. Residues 51-78 (SAERSETERSPHRPIERADAVDTGDRPG) are compositionally biased toward basic and acidic residues. Residues 82 to 91 (TRMSWPSSFH) show a composition bias toward polar residues. A Phosphoserine; by MAPKAPK2 modification is found at S147. S152, S160, and S204 each carry phosphoserine. Residues 296–317 (PSPTPRQRAFQQPPPSVLRQSQ) form a disordered region. S333 is modified (phosphoserine). In terms of domain architecture, PDEase spans 343 to 672 (VKTDQEDLLA…DWYHSAIRQS (330 aa)). K344 participates in a covalent cross-link: Glycyl lysine isopeptide (Lys-Gly) (interchain with G-Cter in SUMO). H419 (proton donor) is an active-site residue. Residue H419 coordinates 3',5'-cyclic AMP. Residues H419 and H423 each coordinate AMP. Positions 423, 459, 460, and 577 each coordinate Zn(2+). AMP-binding residues include D460, D577, Q628, and F631. Mg(2+) is bound at residue D460. Residue D460 participates in Mn(2+) binding. 3',5'-cyclic AMP is bound by residues Q628 and F631. 2 disordered regions span residues 668-690 (AIRQ…PSLP) and 818-844 (SACS…GDPA). A phosphoserine mark is found at S672 and S674. Positions 820–830 (CSGTSGDNSAI) are enriched in polar residues.

Belongs to the cyclic nucleotide phosphodiesterase family. PDE4 subfamily. As to quaternary structure, interacts with LYN (via SH3 domain). Interacts with ARRB2. Zn(2+) serves as cofactor. The cofactor is Mg(2+). Mn(2+) is required as a cofactor. In terms of processing, phosphorylated by MAPKAPK2 at Ser-147; it counteracts PKA-induced activation of PDE4A and modulates intracellular cAMP levels. Likely involved in cellular desensitization to cAMP signaling. Post-translationally, proteolytically cleaved by CASP3. As to expression, isoform 2 is testis specific.

Its subcellular location is the cytoplasm. The protein localises to the cytosol. It is found in the membrane. The enzyme catalyses 3',5'-cyclic AMP + H2O = AMP + H(+). It participates in purine metabolism; 3',5'-cyclic AMP degradation; AMP from 3',5'-cyclic AMP: step 1/1. With respect to regulation, inhibited by rolipram. Functionally, hydrolyzes the second messenger 3',5'-cyclic AMP (cAMP), which is a key regulator of many important physiological processes. Its function is as follows. Efficiently hydrolyzes cAMP. The sequence is that of 3',5'-cyclic-AMP phosphodiesterase 4A (Pde4a) from Rattus norvegicus (Rat).